The chain runs to 258 residues: Regulatory protein RecX (258 aa).

The protein belongs to the RecX family.

The protein resides in the cytoplasm. Its function is as follows. Modulates RecA activity. The sequence is that of Regulatory protein RecX from Streptococcus pyogenes serotype M3 (strain ATCC BAA-595 / MGAS315).